Here is a 619-residue protein sequence, read N- to C-terminus: MRVKNFEAWDYVVFAGLFVISSGIGVFFAIKERKKTTSREFLVGGRQMSFGPVALSLTASFMSAVTVLGTPAEVYRFGASFFLFLISYVFVVFFTSELFLPVFYRSGITSTYEYLQLRFNKPVRYAATIIYIVQTILYTGVVVYAPALALNQVTGFNLWASVFATGIVCTFYCSLGGLKAVVWTDAFQMVVMIVGFLTVLIQGSNHVGGFNNVLEKAGNGSRLHIVDFDVDPLRRHTFWTITIGGTFTWLGVYGVNQSTIQRCISCKTEKHAKLALYFNLLGLWIIVACAVFSGLIMYSHFKDCDPWTSGVISAPDQLMPYFVMEIFATMPGLPGLFVACAFSGTLSTVAASINALATVTFEDFVKSCFPHLSDKLSTWISKGLCILFGIMCTSMAVVASLMGSVVQAALSIHGMCGGPMLGLFTLGLVFPFVNWKGALGGLLTGITLSFWVAIGSFIYPAPESKTLPLPLSTEHCVELNITTTVAPQISSRPVLADTWYSLSYLYFSAVGCLGCIAAGIIISFLTGKQRGKDIDPLLIRPVCNLFCFWSKKYKTLCWCGVQHDRETEQDYLDSGSAWKQGVESGLQNGLKQDTLAQIPGYNPKEKSYSNSVPEKTTYF.

Topologically, residues methionine 1–tryptophan 9 are extracellular. The chain crosses the membrane as a helical span at residues aspartate 10–isoleucine 30. Over lysine 31–glutamine 47 the chain is Cytoplasmic. The helical transmembrane segment at methionine 48–leucine 68 threads the bilayer. Over glycine 69–serine 80 the chain is Extracellular. The helical transmembrane segment at phenylalanine 81–proline 101 threads the bilayer. The Cytoplasmic portion of the chain corresponds to valine 102–threonine 128. The helical transmembrane segment at isoleucine 129–alanine 149 threads the bilayer. Residues leucine 150–asparagine 157 are Extracellular-facing. The helical transmembrane segment at leucine 158–leucine 178 threads the bilayer. The Cytoplasmic portion of the chain corresponds to lysine 179–alanine 180. A helical transmembrane segment spans residues valine 181–isoleucine 201. Residues glutamine 202–arginine 235 lie on the Extracellular side of the membrane. A glycan (N-linked (GlcNAc...) asparagine) is linked at asparagine 219. Residues histidine 236 to asparagine 256 form a helical membrane-spanning segment. Over glutamine 257–alanine 275 the chain is Cytoplasmic. The chain crosses the membrane as a helical span at residues leucine 276–isoleucine 296. Topologically, residues methionine 297–tyrosine 321 are extracellular. The chain crosses the membrane as a helical span at residues phenylalanine 322–phenylalanine 342. Topologically, residues serine 343 to cysteine 385 are cytoplasmic. A helical membrane pass occupies residues isoleucine 386 to valine 406. Over glutamine 407–serine 411 the chain is Extracellular. A helical membrane pass occupies residues isoleucine 412–phenylalanine 432. The Cytoplasmic portion of the chain corresponds to valine 433 to glycine 437. The chain crosses the membrane as a helical span at residues alanine 438–isoleucine 458. The Extracellular portion of the chain corresponds to tyrosine 459–tyrosine 504. N-linked (GlcNAc...) asparagine glycosylation is present at asparagine 480. A helical membrane pass occupies residues leucine 505–leucine 525. Residues threonine 526–phenylalanine 619 lie on the Cytoplasmic side of the membrane.

It belongs to the sodium:solute symporter (SSF) (TC 2.A.21) family. In terms of tissue distribution, expressed in the cortical region of the kidney corresponding to the proximal tubule. Expressed in Mueller cells of the inner retina (at protein level). Isoform 1 is expressed in the retina, kidney, small intestine and skeletal muscle. Isoform 2 is not detected in the kidney, small intestine and skeletal muscle. In the kidney, expressed predominantly in tubular epithelial cells of the cortical region and in the convoluted portions of the proximal tubule (pars convoluta). In the small intestine, its expression is highest in the proximal part and gradually decreased towards the distal end. Expressed in the neural retina. Not detected in the caecum and colon.

It is found in the apical cell membrane. It catalyses the reaction (S)-lactate(out) + Na(+)(out) = (S)-lactate(in) + Na(+)(in). It carries out the reaction nicotinate(out) + Na(+)(out) = nicotinate(in) + Na(+)(in). The enzyme catalyses pyruvate(out) + Na(+)(out) = pyruvate(in) + Na(+)(in). The catalysed reaction is propanoate(out) + Na(+)(out) = propanoate(in) + Na(+)(in). It catalyses the reaction butanoate(out) + Na(+)(out) = butanoate(in) + Na(+)(in). It carries out the reaction acetoacetate(out) + Na(+)(out) = acetoacetate(in) + Na(+)(in). Acts as an electroneutral and low-affinity sodium (Na(+))-dependent sodium-coupled solute transporter. Catalyzes the transport across the plasma membrane of many monocarboxylates such as lactate, pyruvate, nicotinate, propionate, butyrate and beta-D-hydroxybutyrate. May be responsible for the first step of reabsorption of monocarboxylates from the lumen of the proximal tubule of the kidney and the small intestine. May play also a role in monocarboxylates transport in the retina. Mediates electroneutral uptake of lactate, with a stoichiometry of 2 Na(+) for each lactate. The sequence is that of Sodium-coupled monocarboxylate transporter 2 (Slc5a12) from Mus musculus (Mouse).